The following is a 201-amino-acid chain: NADH-quinone oxidoreductase subunit C (201 aa).

The protein belongs to the complex I 30 kDa subunit family. In terms of assembly, NDH-1 is composed of 14 different subunits. Subunits NuoB, C, D, E, F, and G constitute the peripheral sector of the complex.

Its subcellular location is the cell inner membrane. It catalyses the reaction a quinone + NADH + 5 H(+)(in) = a quinol + NAD(+) + 4 H(+)(out). NDH-1 shuttles electrons from NADH, via FMN and iron-sulfur (Fe-S) centers, to quinones in the respiratory chain. The immediate electron acceptor for the enzyme in this species is believed to be ubiquinone. Couples the redox reaction to proton translocation (for every two electrons transferred, four hydrogen ions are translocated across the cytoplasmic membrane), and thus conserves the redox energy in a proton gradient. The chain is NADH-quinone oxidoreductase subunit C from Azoarcus sp. (strain BH72).